Reading from the N-terminus, the 291-residue chain is MKIAVYGKGGIGKSTTSCNISVALARRGQKVLQIGCDPKHDSTFTLTGFLIPTIIDTLQSKDYHYEDIWPEDVIHKGYGGVDCVEAGGPPAGAGCGGYVVGETVKLLKELNAFYEYDIILFDVLGDVVCGGFAAPLNYADYCVIITDNGFDALFAANRITASIREKARTHPLRLAGLVGNRTSRRDLINKYVEACPMPVIEVLPIIEDIRVSRVKGKTLFEMVGFEPSLNYVCNYYLGIADQILSQPEGIVPKEIPDRELFSLLSDLYLNPIGGGGQKKNNKENLLGFTRI.

ATP is bound by residues 10–15 (GIGKST) and K39. Residue S14 participates in Mg(2+) binding. Residues C95 and C129 each contribute to the [4Fe-4S] cluster site. An ATP-binding site is contributed by 180 to 181 (NR).

This sequence belongs to the NifH/BchL/ChlL family. In terms of assembly, homodimer. Protochlorophyllide reductase is composed of three subunits; ChlL, ChlN and ChlB. Requires [4Fe-4S] cluster as cofactor.

Its subcellular location is the plastid. The protein localises to the chloroplast. It carries out the reaction chlorophyllide a + oxidized 2[4Fe-4S]-[ferredoxin] + 2 ADP + 2 phosphate = protochlorophyllide a + reduced 2[4Fe-4S]-[ferredoxin] + 2 ATP + 2 H2O. It participates in porphyrin-containing compound metabolism; chlorophyll biosynthesis (light-independent). Component of the dark-operative protochlorophyllide reductase (DPOR) that uses Mg-ATP and reduced ferredoxin to reduce ring D of protochlorophyllide (Pchlide) to form chlorophyllide a (Chlide). This reaction is light-independent. The L component serves as a unique electron donor to the NB-component of the complex, and binds Mg-ATP. The chain is Light-independent protochlorophyllide reductase iron-sulfur ATP-binding protein from Pinus thunbergii (Japanese black pine).